The chain runs to 2925 residues: TPR and ankyrin repeat-containing protein 1 (2925 aa).

2 TPR repeats span residues 15 to 48 (AVLL…DPTY) and 50 to 82 (KGYY…VQRS). ANK repeat units lie at residues 168–198 (EKYV…SVET), 203–232 (PLHA…EWKG), 240–276 (DGCT…DPTL), 463–492 (SQER…DPRA), 497–518 (EGDT…DIGF), and 546–575 (NGNT…KFDI). Disordered stretches follow at residues 612–669 (SRQD…LPGT), 706–741 (PEDC…DCSE), and 1077–1103 (VEPG…SIEV). Residues 624–641 (SKSTAPGHTSQLKSQGSF) show a composition bias toward polar residues. Basic and acidic residues predominate over residues 720–730 (AGKEGKKDDKP). A compositionally biased stretch (acidic residues) spans 1085 to 1103 (GGEEEEEEEDEEEEDSIEV). TPR repeat units follow at residues 1699–1732 (PAEW…EKEK) and 1793–1826 (LGKI…DLAL). Residues 2301–2330 (EEFEKLLHQEEDNYNRELKALESEKDERGR) adopt a coiled-coil conformation.

The polypeptide is TPR and ankyrin repeat-containing protein 1 (TRANK1) (Homo sapiens (Human)).